A 136-amino-acid polypeptide reads, in one-letter code: 5-hydroxyisourate hydrolase (136 aa).

The first 22 residues, 1-22, serve as a signal peptide directing secretion; it reads MKRHILATVIASLVAAPAMALA. Positions 31, 69, and 133 each coordinate substrate.

Belongs to the transthyretin family. 5-hydroxyisourate hydrolase subfamily. Homotetramer.

The protein resides in the periplasm. The catalysed reaction is 5-hydroxyisourate + H2O = 5-hydroxy-2-oxo-4-ureido-2,5-dihydro-1H-imidazole-5-carboxylate + H(+). Catalyzes the hydrolysis of 5-hydroxyisourate (HIU) to 2-oxo-4-hydroxy-4-carboxy-5-ureidoimidazoline (OHCU). In Salmonella dublin, this protein is 5-hydroxyisourate hydrolase (hiuH).